The sequence spans 488 residues: Glutamyl-tRNA(Gln) amidotransferase subunit A (488 aa).

Active-site charge relay system residues include Lys78 and Ser153. The active-site Acyl-ester intermediate is Ser177.

Belongs to the amidase family. GatA subfamily. In terms of assembly, heterotrimer of A, B and C subunits.

It catalyses the reaction L-glutamyl-tRNA(Gln) + L-glutamine + ATP + H2O = L-glutaminyl-tRNA(Gln) + L-glutamate + ADP + phosphate + H(+). Its function is as follows. Allows the formation of correctly charged Gln-tRNA(Gln) through the transamidation of misacylated Glu-tRNA(Gln) in organisms which lack glutaminyl-tRNA synthetase. The reaction takes place in the presence of glutamine and ATP through an activated gamma-phospho-Glu-tRNA(Gln). The sequence is that of Glutamyl-tRNA(Gln) amidotransferase subunit A from Caldanaerobacter subterraneus subsp. tengcongensis (strain DSM 15242 / JCM 11007 / NBRC 100824 / MB4) (Thermoanaerobacter tengcongensis).